We begin with the raw amino-acid sequence, 649 residues long: FAS-associated factor 1 (649 aa).

Positions 1–57 (MASNMDREMILADFQACTGIENIDEAITLLEQNNWDLVAAINGVIPQENGILQSDFG) constitute a UBA domain. 2 disordered regions span residues 56-84 (FGGETMPGPTFDPASHPAPASTPSSSAFR) and 266-290 (RRTSPVQTREQSEEQSTDVHMVSDS). Residues 68–82 (PASHPAPASTPSSSA) show a composition bias toward low complexity. S319 bears the Phosphoserine mark. In terms of domain architecture, UBX spans 568 to 645 (NAEPVSKLRI…NLFPQETLFL (78 aa)). T579 carries the post-translational modification Phosphothreonine. A Phosphoserine modification is found at S581.

In terms of assembly, interacts with CDT1 and ATPase VCP/p97. Interacts (via UBA domain) with FAS (via death domain). Interacts (via UBA domain) with NLRP12 (via DAPIN/PYRIN domain).

It localises to the nucleus. In terms of biological role, ubiquitin-binding protein. Required for the progression of DNA replication forks by targeting DNA replication licensing factor CDT1 for degradation. Potentiates but cannot initiate FAS-induced apoptosis. The sequence is that of FAS-associated factor 1 (Faf1) from Mus musculus (Mouse).